The primary structure comprises 466 residues: L-seryl-tRNA(Sec) selenium transferase (466 aa).

Lys293 is subject to N6-(pyridoxal phosphate)lysine.

Belongs to the SelA family. Pyridoxal 5'-phosphate is required as a cofactor.

It localises to the cytoplasm. It catalyses the reaction L-seryl-tRNA(Sec) + selenophosphate + H(+) = L-selenocysteinyl-tRNA(Sec) + phosphate. The protein operates within aminoacyl-tRNA biosynthesis; selenocysteinyl-tRNA(Sec) biosynthesis; selenocysteinyl-tRNA(Sec) from L-seryl-tRNA(Sec) (bacterial route): step 1/1. Its function is as follows. Converts seryl-tRNA(Sec) to selenocysteinyl-tRNA(Sec) required for selenoprotein biosynthesis. This chain is L-seryl-tRNA(Sec) selenium transferase, found in Desulfotalea psychrophila (strain LSv54 / DSM 12343).